The chain runs to 308 residues: Transaldolase (308 aa).

Lysine 125 serves as the catalytic Schiff-base intermediate with substrate.

The protein belongs to the transaldolase family. Type 1 subfamily. As to quaternary structure, homodimer.

The protein resides in the cytoplasm. The enzyme catalyses D-sedoheptulose 7-phosphate + D-glyceraldehyde 3-phosphate = D-erythrose 4-phosphate + beta-D-fructose 6-phosphate. It functions in the pathway carbohydrate degradation; pentose phosphate pathway; D-glyceraldehyde 3-phosphate and beta-D-fructose 6-phosphate from D-ribose 5-phosphate and D-xylulose 5-phosphate (non-oxidative stage): step 2/3. Functionally, transaldolase is important for the balance of metabolites in the pentose-phosphate pathway. The protein is Transaldolase of Pseudomonas putida (strain W619).